The chain runs to 228 residues: Odorant-binding protein 47 (228 aa).

Disulfide bonds link Cys60/Cys225, Cys73/Cys215, Cys74/Cys204, Cys88/Cys114, Cys110/Cys185, and Cys158/Cys195. N-linked (GlcNAc...) asparagine glycosylation occurs at Asn117.

The protein belongs to the PBP/GOBP family. In terms of processing, glycosylated. Head without antennae (at protein level).

It localises to the secreted. Present in the aqueous fluid surrounding olfactory sensory dendrites and are thought to aid in the capture and transport of hydrophobic odorants into and through this fluid. Binds N-phenyl-1-naphthylamine, menthol, citronellal, 1-dodecanol, decanal, p-tert-butylbenzophenone, 4-hydroxy-4'-isopropylazobenzene, 2-pyrrolyl-p-methyl-azobenzene and indole. Expressed in mosquito head but barely detectable in antennae, which suggests that it may be present in mouth structures, such as palpi and proboscis, and may have a function in taste. This is Odorant-binding protein 47 from Anopheles gambiae (African malaria mosquito).